The following is a 306-amino-acid chain: Arginase (306 aa).

The Mn(2+) site is built by histidine 96, aspartate 123, histidine 125, and aspartate 127. Substrate is bound by residues 125-129, 136-138, and aspartate 178; these read HTDFH and SGN. Mn(2+)-binding residues include aspartate 226 and aspartate 228. 2 residues coordinate substrate: threonine 240 and glutamate 271.

This sequence belongs to the arginase family. Mn(2+) serves as cofactor.

The catalysed reaction is L-arginine + H2O = urea + L-ornithine. Its pathway is nitrogen metabolism; urea cycle; L-ornithine and urea from L-arginine: step 1/1. The polypeptide is Arginase (arcB) (Brucella abortus biovar 1 (strain 9-941)).